A 934-amino-acid chain; its full sequence is Translation initiation factor IF-2 (934 aa).

Residues 54–323 are disordered; that stretch reads AQESKPTTPP…KRQKRNEYEA (270 aa). Composition is skewed to low complexity over residues 80–154, 185–197, 206–231, and 238–250; these read PKPG…AGKP, RGGA…PRPG, GQAP…PGAA, and RPSP…TPSP. Gly residues predominate over residues 260–303; it reads GFGGGRGRGGRPGGPGGPGGPGGPGPRGGRGGRRGGTAGAFGRP. Positions 308-317 are enriched in basic residues; that stretch reads RRGRKSKRQK. In terms of domain architecture, tr-type G spans 430-602; it reads QRPPVVTVMG…VLLTADASLD (173 aa). Positions 439 to 446 are G1; that stretch reads GHVDHGKT. Residue 439–446 coordinates GTP; it reads GHVDHGKT. The G2 stretch occupies residues 464–468; that stretch reads GITQH. The segment at 489–492 is G3; the sequence is DTPG. GTP is bound by residues 489–493 and 543–546; these read DTPGH and NKID. Positions 543–546 are G4; sequence NKID. A G5 region spans residues 579–581; that stretch reads SAK.

The protein belongs to the TRAFAC class translation factor GTPase superfamily. Classic translation factor GTPase family. IF-2 subfamily.

It is found in the cytoplasm. Its function is as follows. One of the essential components for the initiation of protein synthesis. Protects formylmethionyl-tRNA from spontaneous hydrolysis and promotes its binding to the 30S ribosomal subunits. Also involved in the hydrolysis of GTP during the formation of the 70S ribosomal complex. The polypeptide is Translation initiation factor IF-2 (Corynebacterium urealyticum (strain ATCC 43042 / DSM 7109)).